A 184-amino-acid polypeptide reads, in one-letter code: Photosystem I assembly protein Ycf4 (184 aa).

The next 2 membrane-spanning stretches (helical) occupy residues 19–39 (ISNF…VLVG) and 57–77 (ILFF…LFIS).

Belongs to the Ycf4 family.

Its subcellular location is the plastid. The protein localises to the chloroplast thylakoid membrane. In terms of biological role, seems to be required for the assembly of the photosystem I complex. This chain is Photosystem I assembly protein Ycf4, found in Eucalyptus globulus subsp. globulus (Tasmanian blue gum).